Consider the following 147-residue polypeptide: Ribonuclease H (147 aa).

The RNase H type-1 domain maps to 3–145; it reads TEDRVEIYTD…ADQLANKGVE (143 aa). Mg(2+) is bound by residues Asp12, Glu50, Asp72, and Asp137.

The protein belongs to the RNase H family. Monomer. Mg(2+) is required as a cofactor.

The protein resides in the cytoplasm. The catalysed reaction is Endonucleolytic cleavage to 5'-phosphomonoester.. Endonuclease that specifically degrades the RNA of RNA-DNA hybrids. This chain is Ribonuclease H, found in Chromobacterium violaceum (strain ATCC 12472 / DSM 30191 / JCM 1249 / CCUG 213 / NBRC 12614 / NCIMB 9131 / NCTC 9757 / MK).